The chain runs to 197 residues: dCTP deaminase, dUMP-forming (197 aa).

Residues 105–110, Asp123, 131–133, Gln152, Tyr166, Lys174, and Gln178 each bind dCTP; these read RSSMGR and TLE. Glu133 (proton donor/acceptor) is an active-site residue.

It belongs to the dCTP deaminase family. As to quaternary structure, homotrimer.

The catalysed reaction is dCTP + 2 H2O = dUMP + NH4(+) + diphosphate. The protein operates within pyrimidine metabolism; dUMP biosynthesis; dUMP from dCTP: step 1/1. Functionally, bifunctional enzyme that catalyzes both the deamination of dCTP to dUTP and the hydrolysis of dUTP to dUMP without releasing the toxic dUTP intermediate. This is dCTP deaminase, dUMP-forming from Methanosphaera stadtmanae (strain ATCC 43021 / DSM 3091 / JCM 11832 / MCB-3).